The following is a 400-amino-acid chain: Formate-dependent phosphoribosylglycinamide formyltransferase (400 aa).

Residues 22–23 (EL) and E82 each bind N(1)-(5-phospho-beta-D-ribosyl)glycinamide. Residues R115, K157, 162–167 (SSGKGQ), 197–200 (EGFV), and E205 each bind ATP. An ATP-grasp domain is found at 120-315 (RLAAETLGLP…EFELHARAIL (196 aa)). Positions 274 and 286 each coordinate Mg(2+). N(1)-(5-phospho-beta-D-ribosyl)glycinamide is bound by residues D293, K362, and 369–370 (RR).

Belongs to the PurK/PurT family. In terms of assembly, homodimer.

It carries out the reaction N(1)-(5-phospho-beta-D-ribosyl)glycinamide + formate + ATP = N(2)-formyl-N(1)-(5-phospho-beta-D-ribosyl)glycinamide + ADP + phosphate + H(+). It functions in the pathway purine metabolism; IMP biosynthesis via de novo pathway; N(2)-formyl-N(1)-(5-phospho-D-ribosyl)glycinamide from N(1)-(5-phospho-D-ribosyl)glycinamide (formate route): step 1/1. Its function is as follows. Involved in the de novo purine biosynthesis. Catalyzes the transfer of formate to 5-phospho-ribosyl-glycinamide (GAR), producing 5-phospho-ribosyl-N-formylglycinamide (FGAR). Formate is provided by PurU via hydrolysis of 10-formyl-tetrahydrofolate. This is Formate-dependent phosphoribosylglycinamide formyltransferase from Mycolicibacterium gilvum (strain PYR-GCK) (Mycobacterium gilvum (strain PYR-GCK)).